The chain runs to 962 residues: Protein lin-36 (962 aa).

Disordered regions lie at residues 1–53 (MSEE…ETEG) and 74–99 (TSSG…PREE). Residues 23 to 40 (DSHVTVHSVEQDSQHSGE) are compositionally biased toward basic and acidic residues. Over residues 74 to 95 (TSSGEVLDESQVTPTKQASSSQ) the composition is skewed to polar residues. The THAP-type zinc finger occupies 161-249 (LTHKPCTVCN…IEAFGVPVAI (89 aa)). Basic and acidic residues-rich tracts occupy residues 452 to 472 (KAEE…KHAE) and 534 to 570 (SHEE…DEQF). Disordered regions lie at residues 452–575 (KAEE…KMVQ), 612–676 (IAAT…PEER), 744–788 (QEKG…SASS), and 932–962 (DPKW…DSQQ). Over residues 626–637 (SSEQTPEPTTSQ) the composition is skewed to low complexity. Residues 647–658 (KTKESAVQKVEK) show a composition bias toward basic and acidic residues. Positions 939–951 (QQQQQQQQQQQEQ) are enriched in low complexity. A compositionally biased stretch (polar residues) spans 952 to 962 (FPGQGSSDSQQ).

Expressed in vulval precursor P(3-8).p cells and their descendants, neurons of the head, tail and ventral cord, hypodermal and intestinal cells and germline cells.

The protein localises to the nucleus. Its function is as follows. Required to negatively regulate vulval development. Antagonizes Ras-mediated vulval induction. Acts cell autonomously. The protein is Protein lin-36 (lin-36) of Caenorhabditis elegans.